Reading from the N-terminus, the 396-residue chain is Homoserine O-acetyltransferase (396 aa).

The region spanning 53–370 is the AB hydrolase-1 domain; it reads NAILVCHALT…DRGHDAFLLE (318 aa). Serine 158 functions as the Nucleophile in the catalytic mechanism. Residue arginine 228 coordinates substrate. Residues aspartate 331 and histidine 364 contribute to the active site. Position 365 (aspartate 365) interacts with substrate.

Belongs to the AB hydrolase superfamily. MetX family. In terms of assembly, homodimer.

It is found in the cytoplasm. The enzyme catalyses L-homoserine + acetyl-CoA = O-acetyl-L-homoserine + CoA. Its pathway is amino-acid biosynthesis; L-methionine biosynthesis via de novo pathway; O-acetyl-L-homoserine from L-homoserine: step 1/1. Functionally, transfers an acetyl group from acetyl-CoA to L-homoserine, forming acetyl-L-homoserine. This Gluconobacter oxydans (strain 621H) (Gluconobacter suboxydans) protein is Homoserine O-acetyltransferase.